A 481-amino-acid polypeptide reads, in one-letter code: WASH complex subunit 1 (481 aa).

Positions 1–54 are required for WASH complex assembly; that stretch reads MVRMTQKRYLEGQVYSVPLIQPDLRREEAVHQITDALQYLEMISTDIFTRVSES. 2 disordered regions span residues 273-417 and 429-481; these read SVPA…SGGD and RRKG…DWEA. Positions 304–341 are enriched in pro residues; sequence APPPPPPPPPPPPEPTHVPVPPPGTSAAPPPPPPPPPM. Positions 359–481 are VCA; that stretch reads KGAPSEVVQP…AADDEDDWEA (123 aa). A WH2 domain is found at 371-393; it reads GRASLLESIRNAGGIGKANLRNV. Residues 392–407 show a composition bias toward basic and acidic residues; sequence NVKERKMEKKKQKEQE.

This sequence belongs to the WASH1 family. In terms of assembly, component of the WASH complex.

It is found in the early endosome membrane. The protein resides in the recycling endosome membrane. Functionally, acts as a nucleation-promoting factor at the surface of endosomes, where it recruits and activates the Arp2/3 complex to induce actin polymerization, playing a key role in the fission of tubules that serve as transport intermediates during endosome sorting. The chain is WASH complex subunit 1 from Danio rerio (Zebrafish).